A 64-amino-acid polypeptide reads, in one-letter code: MFTVFLLVVLATTVVSSTSGRRAFRGRNAAAKASGLVGLTDRRPECCSDPRCNSTHPELCGGRR.

An N-terminal signal peptide occupies residues 1–17 (MFTVFLLVVLATTVVSS). A propeptide spanning residues 18–43 (TSGRRAFRGRNAAAKASGLVGLTDRR) is cleaved from the precursor. 2 disulfides stabilise this stretch: cysteine 46/cysteine 52 and cysteine 47/cysteine 60. Residues 48–50 (SDP) are ser-Xaa-Pro motif, crucial for potent interaction with nAChR. Glycine 61 carries the post-translational modification Glycine amide.

Belongs to the conotoxin A superfamily. As to expression, expressed by the venom duct.

It localises to the secreted. Alpha-conotoxins act on postsynaptic membranes, they bind to the nicotinic acetylcholine receptors (nAChR) and thus inhibit them. The sequence is that of Alpha-conotoxin-like Ai1.2 from Conus ammiralis (Admiral cone).